The chain runs to 122 residues: Large ribosomal subunit protein uL14 (122 aa).

Belongs to the universal ribosomal protein uL14 family. Part of the 50S ribosomal subunit. Forms a cluster with proteins L3 and L19. In the 70S ribosome, L14 and L19 interact and together make contacts with the 16S rRNA in bridges B5 and B8.

Its function is as follows. Binds to 23S rRNA. Forms part of two intersubunit bridges in the 70S ribosome. This Alkalilimnicola ehrlichii (strain ATCC BAA-1101 / DSM 17681 / MLHE-1) protein is Large ribosomal subunit protein uL14.